The following is a 214-amino-acid chain: Phosphatidylserine decarboxylase proenzyme (214 aa).

The active-site Schiff-base intermediate with substrate; via pyruvic acid is the serine 183. Serine 183 carries the post-translational modification Pyruvic acid (Ser); by autocatalysis.

Belongs to the phosphatidylserine decarboxylase family. PSD-A subfamily. As to quaternary structure, heterodimer of a large membrane-associated beta subunit and a small pyruvoyl-containing alpha subunit. It depends on pyruvate as a cofactor. Post-translationally, is synthesized initially as an inactive proenzyme. Formation of the active enzyme involves a self-maturation process in which the active site pyruvoyl group is generated from an internal serine residue via an autocatalytic post-translational modification. Two non-identical subunits are generated from the proenzyme in this reaction, and the pyruvate is formed at the N-terminus of the alpha chain, which is derived from the carboxyl end of the proenzyme. The post-translation cleavage follows an unusual pathway, termed non-hydrolytic serinolysis, in which the side chain hydroxyl group of the serine supplies its oxygen atom to form the C-terminus of the beta chain, while the remainder of the serine residue undergoes an oxidative deamination to produce ammonia and the pyruvoyl prosthetic group on the alpha chain.

It localises to the cell membrane. The catalysed reaction is a 1,2-diacyl-sn-glycero-3-phospho-L-serine + H(+) = a 1,2-diacyl-sn-glycero-3-phosphoethanolamine + CO2. Its pathway is phospholipid metabolism; phosphatidylethanolamine biosynthesis; phosphatidylethanolamine from CDP-diacylglycerol: step 2/2. Its function is as follows. Catalyzes the formation of phosphatidylethanolamine (PtdEtn) from phosphatidylserine (PtdSer). The chain is Phosphatidylserine decarboxylase proenzyme from Chlorobaculum parvum (strain DSM 263 / NCIMB 8327) (Chlorobium vibrioforme subsp. thiosulfatophilum).